The sequence spans 423 residues: Divalent metal cation transporter MntH (423 aa).

A run of 11 helical transmembrane segments spans residues 31-51 (LMMLGPAFIAAIGYIDPGNFA), 58-78 (SSFGYQLLWVVLWANLMAMLI), 116-136 (IIAIATDLAEFIGAAVGFQLV), 137-157 (FGISLMEGAMITAVATVMILI), 168-188 (VVIGSLLMLVAVIYIAELFFA), 213-233 (AAGILGATVMPHVIYLHSALF), 254-274 (IAMVIAGFVNIAIVAMAAAVF), 302-322 (VLFGVSLIASGLSSTVVGTMA), 342-362 (FITMAPSFVVIGLGMNTTDIL), 363-383 (VMSQVVLSFGIALAIIPLLIF), and 401-421 (YAGVVIVSLVLSLNAYLMVTL).

The protein belongs to the NRAMP family.

It localises to the cell inner membrane. H(+)-stimulated, divalent metal cation uptake system. The chain is Divalent metal cation transporter MntH from Vibrio campbellii (strain ATCC BAA-1116).